The sequence spans 343 residues: MYRTLFSLVLSRFDPERAHRLAFAAIRALPVIGLGSLLRRFTAPDPSLAVEALGLRFDSPFGIAAGFDKDGEGVIGLGALGFGHVEVGTITARPQPGNDKPRLFRLLPDRAVINRMGFNNHGAGAAANRLLRVRRARRRPVLGVNISKSRAVAVEDATADYLISARALAPVADYLVVNVSSPNTPGLRGLQEREALAPLLSAVKAASGKKPLLVKIAPDLTDEQIVAVARLAVELGLAGIIATNTTIARDGLSSDPAVVEAAGAGGLSGAPLAARSLEVLTLIRANVPPSLCVISVGGVETAQDVQRRLDAGATLVQGYTAFLYRGPLWARQITRGLSALRSR.

FMN is bound by residues 65-69 (AGFDK) and Thr-89. Residue Lys-69 coordinates substrate. Residue 114-118 (NRMGF) participates in substrate binding. FMN-binding residues include Asn-145 and Asn-178. Asn-178 provides a ligand contact to substrate. Catalysis depends on Ser-181, which acts as the Nucleophile. Asn-183 provides a ligand contact to substrate. FMN is bound by residues Lys-215 and Thr-243. A substrate-binding site is contributed by 244–245 (NT). Residues Gly-269, Gly-298, and 319–320 (YT) contribute to the FMN site.

It belongs to the dihydroorotate dehydrogenase family. Type 2 subfamily. Monomer. FMN serves as cofactor.

It is found in the cell membrane. It catalyses the reaction (S)-dihydroorotate + a quinone = orotate + a quinol. Its pathway is pyrimidine metabolism; UMP biosynthesis via de novo pathway; orotate from (S)-dihydroorotate (quinone route): step 1/1. Functionally, catalyzes the conversion of dihydroorotate to orotate with quinone as electron acceptor. This chain is Dihydroorotate dehydrogenase (quinone), found in Leifsonia xyli subsp. xyli (strain CTCB07).